Reading from the N-terminus, the 92-residue chain is Large ribosomal subunit protein eL43 (92 aa).

Residues cysteine 39, cysteine 42, cysteine 57, and cysteine 60 each contribute to the Zn(2+) site. The C4-type zinc finger occupies cysteine 39–cysteine 60.

It belongs to the eukaryotic ribosomal protein eL43 family. Putative zinc-binding subfamily. In terms of assembly, part of the 50S ribosomal subunit. It depends on Zn(2+) as a cofactor.

Binds to the 23S rRNA. In Methanocaldococcus jannaschii (strain ATCC 43067 / DSM 2661 / JAL-1 / JCM 10045 / NBRC 100440) (Methanococcus jannaschii), this protein is Large ribosomal subunit protein eL43.